The chain runs to 413 residues: Eukaryotic initiation factor 4A-10 (413 aa).

Positions aspartate 40 to glutamine 68 match the Q motif motif. The Helicase ATP-binding domain occupies isoleucine 71 to isoleucine 241. Alanine 84–threonine 91 provides a ligand contact to ATP. A DEAD box motif is present at residues aspartate 189 to aspartate 192. The Helicase C-terminal domain maps to glycine 252–leucine 413.

The protein belongs to the DEAD box helicase family. eIF4A subfamily. As to quaternary structure, eIF4F is a multi-subunit complex, the composition of which varies with external and internal environmental conditions. It is composed of at least EIF4A, EIF4E and EIF4G.

It carries out the reaction ATP + H2O = ADP + phosphate + H(+). Its function is as follows. ATP-dependent RNA helicase which is a subunit of the eIF4F complex involved in cap recognition and is required for mRNA binding to ribosome. In the current model of translation initiation, eIF4A unwinds RNA secondary structures in the 5'-UTR of mRNAs which is necessary to allow efficient binding of the small ribosomal subunit, and subsequent scanning for the initiator codon. This is Eukaryotic initiation factor 4A-10 from Nicotiana tabacum (Common tobacco).